The following is a 224-amino-acid chain: Imidazoleglycerol-phosphate dehydratase (224 aa).

It belongs to the imidazoleglycerol-phosphate dehydratase family.

It carries out the reaction D-erythro-1-(imidazol-4-yl)glycerol 3-phosphate = 3-(imidazol-4-yl)-2-oxopropyl phosphate + H2O. It functions in the pathway amino-acid biosynthesis; L-histidine biosynthesis; L-histidine from 5-phospho-alpha-D-ribose 1-diphosphate: step 6/9. This is Imidazoleglycerol-phosphate dehydratase (HIS3) from Cyberlindnera jadinii (Torula yeast).